We begin with the raw amino-acid sequence, 394 residues long: Protein arginine N-methyltransferase 8 (394 aa).

Residue Gly2 is the site of N-myristoyl glycine attachment. Residues 16–40 are disordered; the sequence is MAENAAESTEVNSPPSQPPQPVVPA. 2 short sequence motifs (SH3-binding) span residues 29–42 and 53–58; these read PPSQ…PAKP and PSCPGR. Residues 30-39 show a composition bias toward pro residues; sequence PSQPPQPVVP. Omega-N-methylarginine; by autocatalysis is present on Arg58. Arg73 is modified (asymmetric dimethylarginine; by autocatalysis). The SAM-dependent MTase PRMT-type domain occupies 73 to 394; sequence RDYYFDSYAH…TSVSNDYKMR (322 aa). Residues His86, Arg95, Gly119, 119–122, Glu141, and Glu170 each bind S-adenosyl-L-methionine; that span reads GSGT. Catalysis depends on residues Glu185 and Glu194.

The protein belongs to the class I-like SAM-binding methyltransferase superfamily. Protein arginine N-methyltransferase family. PRMT8 subfamily. As to quaternary structure, homodimer. Tetramer; individual homodimers associates to form a homotetramer. Homooctamer; individual homodimers associates to form a homooctamer and homooligomerization is required for proper localization to the cell membrane. Heterodimer with PRMT1; heterodimerization may recruit PRMT1 activity to the plasma membrane. Interacts with PRMT2 (via the SH3 domain). Interacts with FYN (via the SH3 domain). Interacts with EWS; independently of EWS methylation status. In terms of tissue distribution, brain-specific.

The protein resides in the cell membrane. It catalyses the reaction L-arginyl-[protein] + S-adenosyl-L-methionine = N(omega)-methyl-L-arginyl-[protein] + S-adenosyl-L-homocysteine + H(+). It carries out the reaction L-arginyl-[protein] + 2 S-adenosyl-L-methionine = N(omega),N(omega)-dimethyl-L-arginyl-[protein] + 2 S-adenosyl-L-homocysteine + 2 H(+). Its function is as follows. S-adenosyl-L-methionine-dependent and membrane-associated arginine methyltransferase that can both catalyze the formation of omega-N monomethylarginine (MMA) and asymmetrical dimethylarginine (aDMA) in proteins such as NIFK, myelin basic protein, histone H4, H2A and H2A/H2B dimer. Able to mono- and dimethylate EWS protein; however its precise role toward EWS remains unclear as it still interacts with fully methylated EWS. The chain is Protein arginine N-methyltransferase 8 from Homo sapiens (Human).